The chain runs to 341 residues: Antihemorrhagic factor BJ46a (341 aa).

Residues 1 to 19 (MNSLVALVLLGQIIGSTLS) form the signal peptide. Cystatin fetuin-A-type domains follow at residues 22–130 (VRGD…AKCH) and 141–254 (RNCP…SDCV). The Cell attachment site motif lies at 23–25 (RGD). Disulfide bonds link C28/C332, C85/C96, C110/C129, C143/C146, C205/C217, and C230/C253. N95 is a glycosylation site (N-linked (GlcNAc...) asparagine). N-linked (GlcNAc...) asparagine glycosylation occurs at N204. 2 N-linked (GlcNAc...) asparagine glycosylation sites follow: N282 and N293.

Homodimer. Expressed by the liver.

It localises to the secreted. Its function is as follows. Potent inhibitor of hemorrhagic activity but also proteolytic activities of atrolysin C and jararhagin. Inhibition occurs by formation of a non-covalent complex between BJ46a and the proteinases at their metalloproteinase domains. The protein is Antihemorrhagic factor BJ46a of Bothrops jararaca (Jararaca).